Here is a 231-residue protein sequence, read N- to C-terminus: Ion-translocating oxidoreductase complex subunit E (231 aa).

6 helical membrane-spanning segments follow: residues 18-38 (ALVQLLGLCPLLAVTSTATNA), 39-59 (LGLGLATTLVLTLTNLTISTL), 63-83 (TPAEIRIPIYVMIIASVVSAV), 86-106 (LINAYAFGLYQSLGIFIPLIV), 125-145 (ALSALDGFSIGMGATCAMFVL), and 182-202 (PFLLAMLPPGAFIGLGLMLAG).

The protein belongs to the NqrDE/RnfAE family. As to quaternary structure, the complex is composed of six subunits: RsxA, RsxB, RsxC, RsxD, RsxE and RsxG.

It localises to the cell inner membrane. Part of a membrane-bound complex that couples electron transfer with translocation of ions across the membrane. Required to maintain the reduced state of SoxR. The sequence is that of Ion-translocating oxidoreductase complex subunit E from Escherichia coli O1:K1 / APEC.